The chain runs to 205 residues: MQAPPSFYEGDTLEVAKKLLGQKLVHIVDGIKRSGIIVEVEAYKGPGDKAAHSYGGRRTDRTEVMFGAPGHAYVYLIYGMYHCFNVITAPVGTPQGVLIRALEPVDGIEEIKLARYNKTDITKAQYKNLTNGPGKLCRALGITLEERGVSLQSDTLHIELVPEEEHISSQYKITAGPRINIDYAEEAVHYPWRFYYEGHPFVSKK.

Belongs to the DNA glycosylase MPG family.

In Bacillus cereus (strain Q1), this protein is Putative 3-methyladenine DNA glycosylase.